The sequence spans 625 residues: 1-deoxy-D-xylulose-5-phosphate synthase (625 aa).

Thiamine diphosphate is bound by residues His80 and 121 to 123 (GHS). Asp152 serves as a coordination point for Mg(2+). Thiamine diphosphate is bound by residues 153-154 (GA), Asn181, Tyr288, and Glu370. Asn181 contacts Mg(2+).

The protein belongs to the transketolase family. DXPS subfamily. As to quaternary structure, homodimer. Requires Mg(2+) as cofactor. Thiamine diphosphate is required as a cofactor.

The enzyme catalyses D-glyceraldehyde 3-phosphate + pyruvate + H(+) = 1-deoxy-D-xylulose 5-phosphate + CO2. The protein operates within metabolic intermediate biosynthesis; 1-deoxy-D-xylulose 5-phosphate biosynthesis; 1-deoxy-D-xylulose 5-phosphate from D-glyceraldehyde 3-phosphate and pyruvate: step 1/1. Catalyzes the acyloin condensation reaction between C atoms 2 and 3 of pyruvate and glyceraldehyde 3-phosphate to yield 1-deoxy-D-xylulose-5-phosphate (DXP). This Alteromonas mediterranea (strain DSM 17117 / CIP 110805 / LMG 28347 / Deep ecotype) protein is 1-deoxy-D-xylulose-5-phosphate synthase.